A 994-amino-acid chain; its full sequence is Glycine dehydrogenase (decarboxylating) (994 aa).

The tract at residues 1-20 (MTDHAENRCGLEGPRPFSSR) is disordered. Lys-716 carries the post-translational modification N6-(pyridoxal phosphate)lysine.

Belongs to the GcvP family. The glycine cleavage system is composed of four proteins: P, T, L and H. The cofactor is pyridoxal 5'-phosphate.

The enzyme catalyses N(6)-[(R)-lipoyl]-L-lysyl-[glycine-cleavage complex H protein] + glycine + H(+) = N(6)-[(R)-S(8)-aminomethyldihydrolipoyl]-L-lysyl-[glycine-cleavage complex H protein] + CO2. Functionally, the glycine cleavage system catalyzes the degradation of glycine. The P protein binds the alpha-amino group of glycine through its pyridoxal phosphate cofactor; CO(2) is released and the remaining methylamine moiety is then transferred to the lipoamide cofactor of the H protein. The polypeptide is Glycine dehydrogenase (decarboxylating) (Cutibacterium acnes (strain DSM 16379 / KPA171202) (Propionibacterium acnes)).